The sequence spans 736 residues: Dynamin-1-like protein (736 aa).

An N-acetylmethionine modification is found at Met1. The Dynamin-type G domain maps to Ile22–Pro302. A G1 motif region spans residues Gly32–Ser39. Gly32–Ser40 provides a ligand contact to GTP. The interval Val58–Arg60 is G2 motif. Positions Asp146–Gly149 are G3 motif. The segment at Thr215 to Asp218 is G4 motif. GTP contacts are provided by residues Thr215–Asp221 and Asn246–Gln249. Positions Val245–Ser248 are G5 motif. Residues Tyr344 to Ile489 are middle domain. The interval Asn448–Glu685 is interaction with GSK3B. A b domain region spans residues Ala502–Asn569. A disordered region spans residues Arg522–Glu554. Ser529 bears the Phosphoserine mark. Glycyl lysine isopeptide (Lys-Gly) (interchain with G-Cter in SUMO) cross-links involve residues Lys532, Lys535, Lys558, and Lys568. Residues Pro542–Trp736 form a C-terminal dimerization domain region. The tract at residues Glu566–Asn588 is disordered. O-linked (GlcNAc) threonine glycosylation is found at Thr585 and Thr586. A Glycyl lysine isopeptide (Lys-Gly) (interchain with G-Cter in SUMO) cross-link involves residue Lys594. Lys597 is subject to N6-acetyllysine; alternate. A Glycyl lysine isopeptide (Lys-Gly) (interchain with G-Cter in SUMO); alternate cross-link involves residue Lys597. Residue Lys606 forms a Glycyl lysine isopeptide (Lys-Gly) (interchain with G-Cter in SUMO) linkage. Ser607 is modified (phosphoserine). A Glycyl lysine isopeptide (Lys-Gly) (interchain with G-Cter in SUMO) cross-link involves residue Lys608. Ser616 is subject to Phosphoserine; by PINK1. Position 637 is a phosphoserine; by CAMK1 and PKA (Ser637). At Cys644 the chain carries S-nitrosocysteine. Residues Cys644–Leu735 enclose the GED domain. The interval Tyr654–Lys668 is important for homodimerization.

Belongs to the TRAFAC class dynamin-like GTPase superfamily. Dynamin/Fzo/YdjA family. Homotetramer; dimerizes through the N-terminal GTP-middle region of one molecule binding to the GED domain of another DNM1L molecule. Oligomerizes in a GTP-dependent manner to form membrane-associated tubules with a spiral pattern. Interacts with GSK3B and MARCHF5. Interacts (via the GTPase and B domains) with UBE2I; the interaction promotes sumoylation of DNM1L, mainly in its B domain. Interacts with PPP3CA; the interaction dephosphorylates DNM1L and regulates its transition to mitochondria. Interacts with BCL2L1 isoform BCL-X(L) and CLTA; DNM1L and BCL2L1 isoform BCL-X(L) may form a complex in synaptic vesicles that also contains clathrin and MFF. Interacts with MFF; the interaction is inhibited by C11orf65/MFI. Interacts with FIS1. Interacts with MIEF2 and MIEF1; GTP-dependent, regulates GTP hydrolysis and DNM1L oligomerization. Interacts with PGAM5; this interaction leads to dephosphorylation at Ser-656 and activation of GTPase activity and eventually to mitochondria fragmentation. Interacts with RALBP1; during mitosis, recruits DNM1L to the mitochondrion and mediates its activation by the mitotic kinase cyclin B-CDK1. Interacts with FUNDC1; this interaction recruits DNM1L/DRP1 at ER-mitochondria contact sites. Phosphorylation/dephosphorylation events on two sites near the GED domain regulate mitochondrial fission. Phosphorylation on Ser-637 inhibits mitochondrial fission probably through preventing intramolecular interaction. Dephosphorylated on this site by PPP3CA which promotes mitochondrial fission. Phosphorylation on Ser-616 by Pink1 activates the GTPase activity and promotes mitochondrial fission. Phosphorylated in a circadian manner at Ser-637. Dephosphorylated by PGAM5. In terms of processing, sumoylated on various lysine residues within the B domain, probably by MUL1. Sumoylation positively regulates mitochondrial fission. Desumoylated by SENP5 during G2/M transition of mitosis. Appears to be linked to its catalytic activity. Post-translationally, S-nitrosylation increases DNM1L dimerization, mitochondrial fission and causes neuronal damage. O-GlcNAcylation augments the level of the GTP-bound active form of DNM1L and induces translocation from the cytoplasm to mitochondria in cardiomyocytes. It also decreases phosphorylation at Ser-637. In terms of processing, ubiquitination by MARCHF5 affects mitochondrial morphology. In terms of tissue distribution, expressed in the cerebellum and in several regions of the cerebrum and diencephalon. Strongly expressed in the cerebellar Purkinje cells and in the pontile giant neurons. Widely expressed. As to expression, brain-specific. In terms of tissue distribution, brain-specific (at protein level). Expressed in most of the subregions of the brain, including the cerebellum, midbrain, hippocampus, striatum, cerebral cortex, and brain stem. Weakly expressed in the olfactory bulb.

It localises to the cytoplasm. Its subcellular location is the cytosol. The protein resides in the golgi apparatus. The protein localises to the endomembrane system. It is found in the mitochondrion outer membrane. It localises to the peroxisome. Its subcellular location is the membrane. The protein resides in the clathrin-coated pit. The protein localises to the cytoplasmic vesicle. It is found in the secretory vesicle. It localises to the synaptic vesicle membrane. Its subcellular location is the lysosome. The protein resides in the late endosome. The protein localises to the cell membrane. It is found in the postsynaptic density. It catalyses the reaction GTP + H2O = GDP + phosphate + H(+). Its function is as follows. Functions in mitochondrial and peroxisomal division. Mediates membrane fission through oligomerization into membrane-associated tubular structures that wrap around the scission site to constrict and sever the mitochondrial membrane through a GTP hydrolysis-dependent mechanism. The specific recruitment at scission sites is mediated by membrane receptors like MFF, MIEF1 and MIEF2 for mitochondrial membranes. While the recruitment by the membrane receptors is GTP-dependent, the following hydrolysis of GTP induces the dissociation from the receptors and allows DNM1L filaments to curl into closed rings that are probably sufficient to sever a double membrane. Acts downstream of PINK1 to promote mitochondrial fission in a PRKN-dependent manner. Plays an important role in mitochondrial fission during mitosis. Required for formation of endocytic vesicles. Through its function in mitochondrial division, ensures the survival of at least some types of postmitotic neurons, including Purkinje cells, by suppressing oxidative damage. Required for normal brain development, including that of cerebellum. Facilitates developmentally regulated apoptosis during neural tube formation. Required for a normal rate of cytochrome c release and caspase activation during apoptosis; this requirement may depend upon the cell type and the physiological apoptotic cues. Proposed to regulate synaptic vesicle membrane dynamics through association with BCL2L1 isoform Bcl-X(L) which stimulates its GTPase activity in synaptic vesicles; the function may require its recruitment by MFF to clathrin-containing vesicles. Required for programmed necrosis execution. Rhythmic control of its activity following phosphorylation at Ser-637 is essential for the circadian control of mitochondrial ATP production. Functionally, regulates postsynaptic clathrin-mediated endocytosis by positioning the endocytic zone at the postsynaptic density, independently of mitochondrial division. This Mus musculus (Mouse) protein is Dynamin-1-like protein.